The following is a 435-amino-acid chain: NADH-quinone oxidoreductase subunit D (435 aa).

It belongs to the complex I 49 kDa subunit family. In terms of assembly, NDH-1 is composed of 14 different subunits. Subunits NuoB, C, D, E, F, and G constitute the peripheral sector of the complex.

It is found in the cell inner membrane. The enzyme catalyses a quinone + NADH + 5 H(+)(in) = a quinol + NAD(+) + 4 H(+)(out). NDH-1 shuttles electrons from NADH, via FMN and iron-sulfur (Fe-S) centers, to quinones in the respiratory chain. The immediate electron acceptor for the enzyme in this species is believed to be ubiquinone. Couples the redox reaction to proton translocation (for every two electrons transferred, four hydrogen ions are translocated across the cytoplasmic membrane), and thus conserves the redox energy in a proton gradient. The polypeptide is NADH-quinone oxidoreductase subunit D (Xanthomonas campestris pv. campestris (strain 8004)).